The chain runs to 352 residues: MRKIIHVDMDCFFAAVEMRDDPSLRDIPIAIGGSRDRRGVISTANYPARRYGVRSAMPTAMALKLCPQLKVIPGRMAAYKEASQHIREIFARYTPLIEPLSLDEAYLDVSDCQACSGSATLIAQEIRQAIAMELNLTASAGIAPIKFLAKIASDLNKPNGQYVITPDQVLPFLRDLPLSKIPGVGKVTAKRLQELGLITCSDVQNYSQAELLKRFGKFGHVLWERSHGIDEREVSPDRLRKSVGVEQTLAEDIHDWESCESLIEKLYIELETRLRKVRPDLHIARQGVKLKFHDFQQTTQEHVWPQLNKADLLQVARTAWNERRAGRGVRLVGLHVTLLDPQLERQLLLSWE.

In terms of domain architecture, UmuC spans 4 to 185 (IIHVDMDCFF…LPLSKIPGVG (182 aa)). Residues aspartate 8 and aspartate 103 each coordinate Mg(2+). Glutamate 104 is an active-site residue.

It belongs to the DNA polymerase type-Y family. In terms of assembly, monomer. Mg(2+) serves as cofactor.

It localises to the cytoplasm. The catalysed reaction is DNA(n) + a 2'-deoxyribonucleoside 5'-triphosphate = DNA(n+1) + diphosphate. Functionally, poorly processive, error-prone DNA polymerase involved in untargeted mutagenesis. Copies undamaged DNA at stalled replication forks, which arise in vivo from mismatched or misaligned primer ends. These misaligned primers can be extended by PolIV. Exhibits no 3'-5' exonuclease (proofreading) activity. May be involved in translesional synthesis, in conjunction with the beta clamp from PolIII. The protein is DNA polymerase IV of Yersinia enterocolitica serotype O:8 / biotype 1B (strain NCTC 13174 / 8081).